A 367-amino-acid polypeptide reads, in one-letter code: Eukaryotic translation initiation factor 3 subunit H (367 aa).

In terms of domain architecture, MPN spans 14-166; the sequence is VQVEALVVMK…LRAFRLSPNF (153 aa).

This sequence belongs to the eIF-3 subunit H family. Component of the eukaryotic translation initiation factor 3 (eIF-3) complex.

Its subcellular location is the cytoplasm. Functionally, component of the eukaryotic translation initiation factor 3 (eIF-3) complex, which is involved in protein synthesis of a specialized repertoire of mRNAs and, together with other initiation factors, stimulates binding of mRNA and methionyl-tRNAi to the 40S ribosome. The eIF-3 complex specifically targets and initiates translation of a subset of mRNAs involved in cell proliferation. In Sclerotinia sclerotiorum (strain ATCC 18683 / 1980 / Ss-1) (White mold), this protein is Eukaryotic translation initiation factor 3 subunit H.